Consider the following 312-residue polypeptide: Putative electron transfer flavoprotein subunit YdiR (312 aa).

254-282 (LYLTLGISGQIQHMVGGNGAKVIVAINKD) is an FAD binding site.

Belongs to the ETF alpha-subunit/FixB family. As to quaternary structure, ydiR and YdiQ form a heterodimer.

May play a role in a redox process. The sequence is that of Putative electron transfer flavoprotein subunit YdiR (ydiR) from Escherichia coli (strain K12).